We begin with the raw amino-acid sequence, 474 residues long: Na(+)/H(+) antiporter NhaA 3 (474 aa).

A run of 11 helical transmembrane segments spans residues 31–51, 73–93, 110–130, 141–161, 171–191, 194–214, 220–240, 280–300, 309–329, 347–367, and 378–398; these read VGGVLLLVAAIAALVWANIPA, LSVAHWAADGLLAIFFFVAGI, AALPVVAALCGMVVPAVVYTV, GWAVPTATDIAFALAVLAVIG, FLLTLAVVDDLFAILIIAVFF, TLNFAALGGAVVGLAVFWLLL, GWYVYVPLGLVIWALMYNSGV, LAVPLFALFSAGVAITGGALA, LGVVLGLVVGKTLGIFGGTWL, VFAVATLAGIGFTVSLLIGEL, and EVKAAVLTGSLIAAALATVLL.

This sequence belongs to the NhaA Na(+)/H(+) (TC 2.A.33) antiporter family.

The protein localises to the cell membrane. The enzyme catalyses Na(+)(in) + 2 H(+)(out) = Na(+)(out) + 2 H(+)(in). Na(+)/H(+) antiporter that extrudes sodium in exchange for external protons. The protein is Na(+)/H(+) antiporter NhaA 3 of Streptomyces coelicolor (strain ATCC BAA-471 / A3(2) / M145).